The following is a 243-amino-acid chain: DNA repair protein RecO (243 aa).

It belongs to the RecO family.

Involved in DNA repair and RecF pathway recombination. The protein is DNA repair protein RecO of Caulobacter vibrioides (strain NA1000 / CB15N) (Caulobacter crescentus).